We begin with the raw amino-acid sequence, 265 residues long: Glutamate racemase (265 aa).

Substrate is bound by residues 13–14 (DS) and 45–46 (YG). The Proton donor/acceptor role is filled by C77. 78–79 (NT) serves as a coordination point for substrate. The active-site Proton donor/acceptor is C185. 186-187 (TH) is a substrate binding site.

It belongs to the aspartate/glutamate racemases family.

The catalysed reaction is L-glutamate = D-glutamate. Its pathway is cell wall biogenesis; peptidoglycan biosynthesis. Functionally, provides the (R)-glutamate required for cell wall biosynthesis. This chain is Glutamate racemase, found in Vibrio cholerae serotype O1 (strain ATCC 39315 / El Tor Inaba N16961).